The following is a 502-amino-acid chain: Actin nucleation-promoting factor WAS (502 aa).

Positions 39–148 (LGRKCLTLAT…ALVQEKIQKR (110 aa)) constitute a WH1 domain. The interval 146-240 (QKRNQRQSGD…KKISKADIGA (95 aa)) is disordered. Positions 201 to 211 (DIQNPDITSSR) are enriched in polar residues. At Ser221 the chain carries Phosphoserine. In terms of domain architecture, CRIB spans 238–251 (IGAPSGFKHVSHVG). At Tyr291 the chain carries Phosphotyrosine; by FYN and HCK. The tract at residues 307-502 (MRRQEPLPPP…DEDEDDEWDD (196 aa)) is disordered. GRSGPLPPXP motif repeat units lie at residues 337–346 (GRSGPLPPVP) and 376–385 (GRSGPLPPPP). The span at 341-419 (PLPPVPLGIA…PAPPPLPPAL (79 aa)) shows a compositional bias: pro residues. One can recognise a WH2 domain in the interval 430-447 (GRGALLDQIRQGIQLNKT). Ser483 and Ser484 each carry phosphoserine; by CK2. A compositionally biased stretch (acidic residues) spans 486-502 (EGEDQAGDEDEDDEWDD).

Binds the Arp2/3 complex. Interacts with CDC42, RAC, NCK, HCK, FYN, SRC kinase FGR, BTK, ABL1, PSTPIP1, WIP, and to the p85 subunit of PLC-gamma. Interacts (via C-terminus) with ALDOA. Interacts with NCK1 (via SH3 domains). Interacts with FCHSD2. In terms of assembly, (Microbial infection) Interacts with E.coli effector protein EspF(U). Post-translationally, phosphorylated at Tyr-291 by FYN and HCK, inducing WAS effector activity after TCR engagement. Phosphorylation at Tyr-291 enhances WAS activity in promoting actin polymerization and filopodia formation. Expressed predominantly in the thymus. Also found, to a much lesser extent, in the spleen.

It is found in the cytoplasm. Its subcellular location is the cytoskeleton. The protein localises to the nucleus. Functionally, effector protein for Rho-type GTPases that regulates actin filament reorganization via its interaction with the Arp2/3 complex. Important for efficient actin polymerization. Possible regulator of lymphocyte and platelet function. Mediates actin filament reorganization and the formation of actin pedestals upon infection by pathogenic bacteria. In addition to its role in the cytoplasmic cytoskeleton, also promotes actin polymerization in the nucleus, thereby regulating gene transcription and repair of damaged DNA. Promotes homologous recombination (HR) repair in response to DNA damage by promoting nuclear actin polymerization, leading to drive motility of double-strand breaks (DSBs). The sequence is that of Actin nucleation-promoting factor WAS (WAS) from Homo sapiens (Human).